A 239-amino-acid polypeptide reads, in one-letter code: Ribonuclease PH (239 aa).

Residues R86 and 124–126 (GTR) contribute to the phosphate site.

This sequence belongs to the RNase PH family. Homohexameric ring arranged as a trimer of dimers.

The catalysed reaction is tRNA(n+1) + phosphate = tRNA(n) + a ribonucleoside 5'-diphosphate. Functionally, phosphorolytic 3'-5' exoribonuclease that plays an important role in tRNA 3'-end maturation. Removes nucleotide residues following the 3'-CCA terminus of tRNAs; can also add nucleotides to the ends of RNA molecules by using nucleoside diphosphates as substrates, but this may not be physiologically important. Probably plays a role in initiation of 16S rRNA degradation (leading to ribosome degradation) during starvation. The sequence is that of Ribonuclease PH from Rickettsia akari (strain Hartford).